Reading from the N-terminus, the 327-residue chain is Serine/threonine-protein phosphatase alpha-1 isoform (327 aa).

Mn(2+) contacts are provided by Asp62, His64, Asp90, and Asn122. His123 serves as the catalytic Proton donor. Mn(2+)-binding residues include His171 and His246. Positions 308–327 are disordered; it reads GSSGRPLTPPRGANNKNKKK. Thr315 is modified (phosphothreonine).

The protein belongs to the PPP phosphatase family. PP-1 subfamily. As to quaternary structure, interacts with Nop17l. Requires Mn(2+) as cofactor.

It catalyses the reaction O-phospho-L-seryl-[protein] + H2O = L-seryl-[protein] + phosphate. The catalysed reaction is O-phospho-L-threonyl-[protein] + H2O = L-threonyl-[protein] + phosphate. The protein is Serine/threonine-protein phosphatase alpha-1 isoform (Pp1alpha-96A) of Drosophila melanogaster (Fruit fly).